The sequence spans 87 residues: Serine protease inhibitor Kazal-type 12 (87 aa).

An N-terminal signal peptide occupies residues 1–22; sequence MKPAGAFLLLISLACLFLSVDA. The 62-residue stretch at 26–87 folds into the Kazal-like domain; sequence GGFQAFCSNY…KLGFKHEGKC (62 aa). Intrachain disulfides connect cysteine 32-cysteine 68, cysteine 46-cysteine 65, and cysteine 54-cysteine 87.

As to expression, expressed in epydiymis, in the caput.

The protein resides in the secreted. Its function is as follows. Inhibits trypsin. The chain is Serine protease inhibitor Kazal-type 12 (Spink12) from Mus musculus (Mouse).